Consider the following 77-residue polypeptide: Cell division topological specificity factor (77 aa).

This sequence belongs to the MinE family.

Prevents the cell division inhibition by proteins MinC and MinD at internal division sites while permitting inhibition at polar sites. This ensures cell division at the proper site by restricting the formation of a division septum at the midpoint of the long axis of the cell. The sequence is that of Cell division topological specificity factor from Nautilia profundicola (strain ATCC BAA-1463 / DSM 18972 / AmH).